Reading from the N-terminus, the 763-residue chain is ATP-dependent RNA helicase SUV3 homolog, mitochondrial (763 aa).

The N-terminal 43 residues, M1–K43, are a transit peptide targeting the mitochondrion. A Helicase ATP-binding domain is found at N181–E321. G194–T201 lines the ATP pocket. In terms of domain architecture, Helicase C-terminal spans R330–A508. The interval A724–K763 is disordered. The segment covering L727 to V741 has biased composition (polar residues).

It belongs to the helicase family. Mg(2+) serves as cofactor. Mn(2+) is required as a cofactor.

It localises to the mitochondrion. The enzyme catalyses ATP + H2O = ADP + phosphate + H(+). Its function is as follows. Major helicase player in mitochondrial RNA metabolism and maintenance. Likely component of the mitochondrial degradosome (mtEXO) complex, that degrades 3' overhang double-stranded RNA with a 3'-to-5' directionality in an ATP-dependent manner. ATPase and ATP-dependent multisubstrate helicase, able to unwind double-stranded (ds) DNA and RNA, and RNA/DNA heteroduplexes in the 5'-to-3' direction. Regulates mRNA stability and is required for the correct processing and maturation of mitochondrial transcripts. This Drosophila melanogaster (Fruit fly) protein is ATP-dependent RNA helicase SUV3 homolog, mitochondrial.